Consider the following 252-residue polypeptide: Uracil-DNA glycosylase (252 aa).

Asp87 (proton acceptor) is an active-site residue.

The protein belongs to the uracil-DNA glycosylase (UDG) superfamily. UNG family.

The protein localises to the host nucleus. The enzyme catalyses Hydrolyzes single-stranded DNA or mismatched double-stranded DNA and polynucleotides, releasing free uracil.. Functionally, excises uracil residues from the DNA which can arise as a result of misincorporation of dUMP residues by DNA polymerase or deamination of cytosines. Therefore may reduce deleterious uracil incorporation into the viral genome, particularly in terminally differentiated cells which lack DNA repair enzymes. The protein is Uracil-DNA glycosylase (46) of Saimiri sciureus (Common squirrel monkey).